A 595-amino-acid chain; its full sequence is Actin-histidine N-methyltransferase (595 aa).

A disordered region spans residues 1–22; sequence MGKKSRVKTQKSGTGATATVSP. Over residues 10–20 the composition is skewed to polar residues; the sequence is QKSGTGATATV. S-adenosyl-L-methionine contacts are provided by residues R75, 104–106, R254, 275–279, and 325–327; these read EGF, DMCNH, and SGF. One can recognise an SET domain in the interval 94–314; that stretch reads EGFEMVNFKE…AGEQIYIFYG (221 aa). Position 513 is a phosphoserine (S513). Positions 552-595 are disordered; sequence LVNGENCIPNGTRSENEDLNQEENKRAVEDAKGSSSDSTDAVKK. Residues 573–583 show a composition bias toward basic and acidic residues; the sequence is EENKRAVEDAK. The segment covering 584–595 has biased composition (polar residues); sequence GSSSDSTDAVKK.

This sequence belongs to the class V-like SAM-binding methyltransferase superfamily. SETD3 actin-histidine methyltransferase family. As to quaternary structure, interacts with MYOD1. In terms of processing, phosphorylated by GSK3B, which is required for recognition by the SCF(FBXW7) complex and subsequent degradation. Ubiquitinated by the SCF(FBXW7) complex following phosphorylation by GSK3B, leading to its degradation by the proteasome.

The protein resides in the cytoplasm. The protein localises to the nucleus. The enzyme catalyses L-histidyl-[protein] + S-adenosyl-L-methionine = N(tele)-methyl-L-histidyl-[protein] + S-adenosyl-L-homocysteine + H(+). In terms of biological role, protein-histidine N-methyltransferase that specifically mediates 3-methylhistidine (tele-methylhistidine) methylation of actin at 'His-73'. Histidine methylation of actin is required for smooth muscle contraction of the laboring uterus during delivery. Does not have protein-lysine N-methyltransferase activity and probably only catalyzes histidine methylation of actin. The protein is Actin-histidine N-methyltransferase of Otolemur garnettii (Small-eared galago).